Consider the following 162-residue polypeptide: Nucleotide-binding protein Mpe_A3039 (162 aa).

It belongs to the YajQ family.

In terms of biological role, nucleotide-binding protein. The chain is Nucleotide-binding protein Mpe_A3039 from Methylibium petroleiphilum (strain ATCC BAA-1232 / LMG 22953 / PM1).